We begin with the raw amino-acid sequence, 246 residues long: ABC transporter ATP-binding protein NatA (246 aa).

The ABC transporter domain maps to 2–237 (ITLTDCSRRF…ERSEDLNYIF (236 aa)). Position 38-45 (38-45 (GENGAGKT)) interacts with ATP.

It belongs to the ABC transporter superfamily. The complex is composed of NatA and NatB.

The catalysed reaction is Na(+)(in) + ATP + H2O = Na(+)(out) + ADP + phosphate + H(+). Functionally, part of an ABC transporter that catalyzes ATP-dependent electrogenic sodium extrusion. This is ABC transporter ATP-binding protein NatA from Bacillus subtilis (strain 168).